The following is a 393-amino-acid chain: Bifunctional enzyme Fae/Hps (393 aa).

Positions 1 to 161 (MYLIGEALVG…HEKDRAAHAV (161 aa)) are formaldehyde-activating enzyme. The active-site Proton donor is His-17. Residues Asp-19, Leu-48, Lys-66, Thr-68, and Gln-83 each contribute to the substrate site. The interval 162-393 (MGFKVQRLWD…IDQFRIMTDF (232 aa)) is 3-hexulose-6-phosphate synthase.

This sequence in the N-terminal section; belongs to the formaldehyde-activating enzyme family. In the C-terminal section; belongs to the HPS/KGPDC family. HPS subfamily.

It carries out the reaction 5,6,7,8-tetrahydromethanopterin + formaldehyde = 5,10-methylenetetrahydromethanopterin + H2O. The catalysed reaction is D-ribulose 5-phosphate + formaldehyde = D-arabino-hex-3-ulose 6-phosphate. It participates in carbohydrate biosynthesis; D-ribose 5-phosphate biosynthesis. Functionally, catalyzes the condensation of formaldehyde with tetrahydromethanopterin (H(4)MPT) to 5,10-methylenetetrahydromethanopterin. Catalyzes the reversible formation of ribulose-5-phosphate and formaldehyde from 3-hexulose-6-phosphate. This chain is Bifunctional enzyme Fae/Hps, found in Methanoculleus marisnigri (strain ATCC 35101 / DSM 1498 / JR1).